We begin with the raw amino-acid sequence, 503 residues long: Putative cytochrome P450 71A28 (503 aa).

A helical transmembrane segment spans residues 1–21; the sequence is MILISLCFTTFLAFLFLNPLL. Residue Cys443 coordinates heme.

It belongs to the cytochrome P450 family. The cofactor is heme.

It is found in the membrane. The chain is Putative cytochrome P450 71A28 (CYP71A28) from Arabidopsis thaliana (Mouse-ear cress).